The chain runs to 411 residues: 2,3-bisphosphoglycerate-independent phosphoglycerate mutase (411 aa).

Belongs to the BPG-independent phosphoglycerate mutase family. A-PGAM subfamily.

The enzyme catalyses (2R)-2-phosphoglycerate = (2R)-3-phosphoglycerate. It functions in the pathway carbohydrate degradation; glycolysis; pyruvate from D-glyceraldehyde 3-phosphate: step 3/5. Its function is as follows. Catalyzes the interconversion of 2-phosphoglycerate and 3-phosphoglycerate. The polypeptide is 2,3-bisphosphoglycerate-independent phosphoglycerate mutase (Thermococcus gammatolerans (strain DSM 15229 / JCM 11827 / EJ3)).